Reading from the N-terminus, the 310-residue chain is Inner membrane protein YfdC (310 aa).

The span at 1-12 (MDNDKIDQHSDE) shows a compositional bias: basic and acidic residues. A disordered region spans residues 1-27 (MDNDKIDQHSDEIEVESEEKERGKKIE). Topologically, residues 1-58 (MDNDKIDQHSDEIEVESEEKERGKKIEIDEDRLPSRAMAIHEHIRQDGEKELERDAMA) are cytoplasmic. Residues 59–81 (LLWSAIAAGLSMGASLLAKGIFQ) form a helical membrane-spanning segment. Over 82 to 90 (VELEGVPGS) the chain is Periplasmic. A helical transmembrane segment spans residues 91–113 (FLLENLGYTFGFIIVIMARQQLF). Residues 114 to 133 (TENTVTAVLPVMQKPTMSNV) are Cytoplasmic-facing. Residues 134–156 (GLLIRLWGVVLLGNILGTGIAAW) form a helical membrane-spanning segment. Topologically, residues 157–186 (AFEYMPIFNEETRDAFVKIGMDVMKNTPSE) are periplasmic. The chain crosses the membrane as a helical span at residues 187-206 (MFANAIISGWLIATMVWMFP). The Cytoplasmic segment spans residues 207 to 212 (AAGAAK). A helical transmembrane segment spans residues 213-232 (IVVIILMTWLIALGDTTHIV). Topologically, residues 233-251 (VGSVEILYLVFNGTLHWSD) are periplasmic. The helical transmembrane segment at 252-274 (FIWPFALPTLAGNICGGTFIFAL) threads the bilayer. Over 275–310 (MSHAQIRNDMSNKRKAEARQKAERAENIKKNYKNPA) the chain is Cytoplasmic. Positions 291–303 (EARQKAERAENIK) are enriched in basic and acidic residues. Residues 291-310 (EARQKAERAENIKKNYKNPA) are disordered.

It is found in the cell inner membrane. This chain is Inner membrane protein YfdC (yfdC), found in Escherichia coli (strain K12).